A 298-amino-acid chain; its full sequence is CD-NTase-associated protein 6 (298 aa).

Residues 80–85 (GTGKTA) and 204–205 (RR) contribute to the ATP site.

It belongs to the AAA ATPase family. In terms of assembly, homohexamer, forms a 1:1:6 CdnC:Cap7:Cap6 complex.

Regulates complex assembly in a CBASS antivirus system. CBASS (cyclic oligonucleotide-based antiphage signaling system) provides immunity against bacteriophage. The CD-NTase protein synthesizes cyclic nucleotides in response to infection; these serve as specific second messenger signals. The signals activate a diverse range of effectors, leading to bacterial cell death and thus abortive phage infection. A type III CBASS system. Expression of this CBASS system (Cap18-Cap6-Cap7-CdnC-CapW-Cap17) in a susceptible E.coli (strain MG1655) confers resistance to bacteriophage P1. Binds and disassembles an active CdnC:Cap7 complex, inhibiting the complex's ability to synthesize cyclic nucleotide second messengers. An AAA+-ATPase remodeler, in the absence of foreign threat Cap6 probably maintains the Cap7 protein in its open, inactive state. Once activated (presumably by a bacteriophage protein) Cap7 binds to and activates its cognate CD-NTase (CdnC in this bacteria) to synthesize a cyclic nucleotide second messenger which leads to abortive phage infection. In Escherichia coli (strain KTE188), this protein is CD-NTase-associated protein 6.